We begin with the raw amino-acid sequence, 222 residues long: uncharacterized protein (222 aa).

The next 4 membrane-spanning stretches (helical) occupy residues 23–43 (FFAA…TGLL), 67–87 (IWVL…IGYL), 157–177 (IVGG…LGNV), and 187–207 (IILG…WHGY).

It belongs to the DedA family.

It is found in the cell membrane. This is an uncharacterized protein from Mycobacterium leprae (strain TN).